The chain runs to 189 residues: Elongation factor P (189 aa).

An N6-(3,6-diaminohexanoyl)-5-hydroxylysine modification is found at K34.

It belongs to the elongation factor P family. Post-translationally, may be beta-lysylated on the epsilon-amino group of Lys-34 by the combined action of EpmA and EpmB, and then hydroxylated on the C5 position of the same residue by EpmC (if this protein is present). Lysylation is critical for the stimulatory effect of EF-P on peptide-bond formation. The lysylation moiety may extend toward the peptidyltransferase center and stabilize the terminal 3-CCA end of the tRNA. Hydroxylation of the C5 position on Lys-34 may allow additional potential stabilizing hydrogen-bond interactions with the P-tRNA.

The protein resides in the cytoplasm. It functions in the pathway protein biosynthesis; polypeptide chain elongation. In terms of biological role, involved in peptide bond synthesis. Alleviates ribosome stalling that occurs when 3 or more consecutive Pro residues or the sequence PPG is present in a protein, possibly by augmenting the peptidyl transferase activity of the ribosome. Modification of Lys-34 is required for alleviation. This is Elongation factor P from Nitrosococcus oceani (strain ATCC 19707 / BCRC 17464 / JCM 30415 / NCIMB 11848 / C-107).